A 688-amino-acid polypeptide reads, in one-letter code: Polyribonucleotide nucleotidyltransferase (688 aa).

Positions 484 and 490 each coordinate Mg(2+). The KH domain occupies 550-609 (PQTEIFNVAPDKIIEIIGQGGRVIKEIVEKFEVKIDLNTPSGEVKIMGNKERVLKTKEFI). In terms of domain architecture, S1 motif spans 626–688 (DEVLEAQVKR…NKGKIALDLA (63 aa)).

It belongs to the polyribonucleotide nucleotidyltransferase family. The cofactor is Mg(2+).

The protein localises to the cytoplasm. It carries out the reaction RNA(n+1) + phosphate = RNA(n) + a ribonucleoside 5'-diphosphate. Its function is as follows. Involved in mRNA degradation. Catalyzes the phosphorolysis of single-stranded polyribonucleotides processively in the 3'- to 5'-direction. The sequence is that of Polyribonucleotide nucleotidyltransferase from Helicobacter pylori (strain J99 / ATCC 700824) (Campylobacter pylori J99).